A 219-amino-acid polypeptide reads, in one-letter code: Small ribosomal subunit protein uS3 (219 aa).

The KH type-2 domain occupies 38–106 (IRTYLKKKLY…KLNLEIKEIK (69 aa)).

Belongs to the universal ribosomal protein uS3 family. In terms of assembly, part of the 30S ribosomal subunit. Forms a tight complex with proteins S10 and S14.

In terms of biological role, binds the lower part of the 30S subunit head. Binds mRNA in the 70S ribosome, positioning it for translation. The polypeptide is Small ribosomal subunit protein uS3 (Lachnoclostridium phytofermentans (strain ATCC 700394 / DSM 18823 / ISDg) (Clostridium phytofermentans)).